Here is a 415-residue protein sequence, read N- to C-terminus: Tyrosine--tRNA ligase (415 aa).

Y34 serves as a coordination point for L-tyrosine. The short motif at 39–48 is the 'HIGH' region element; sequence PSADSLHLGN. Residues Y162 and Q166 each coordinate L-tyrosine. The 'KMSKS' region motif lies at 224 to 228; that stretch reads KFGKS. ATP is bound at residue K227. The region spanning 346-413 is the S4 RNA-binding domain; sequence IKIIDLLNLA…KRNYFLIVWN (68 aa).

The protein belongs to the class-I aminoacyl-tRNA synthetase family. TyrS type 1 subfamily. In terms of assembly, homodimer.

Its subcellular location is the cytoplasm. The enzyme catalyses tRNA(Tyr) + L-tyrosine + ATP = L-tyrosyl-tRNA(Tyr) + AMP + diphosphate + H(+). Functionally, catalyzes the attachment of tyrosine to tRNA(Tyr) in a two-step reaction: tyrosine is first activated by ATP to form Tyr-AMP and then transferred to the acceptor end of tRNA(Tyr). This chain is Tyrosine--tRNA ligase, found in Ureaplasma urealyticum serovar 10 (strain ATCC 33699 / Western).